Here is a 334-residue protein sequence, read N- to C-terminus: Glyceraldehyde-3-phosphate dehydrogenase (334 aa).

NAD(+)-binding positions include 12-13 and G111; that span reads TI. 140 to 142 is a D-glyceraldehyde 3-phosphate binding site; it reads SCN. C141 acts as the Nucleophile in catalysis. Residue R167 participates in NAD(+) binding. D-glyceraldehyde 3-phosphate is bound at residue 192–193; the sequence is HG. Q298 contributes to the NAD(+) binding site.

The protein belongs to the glyceraldehyde-3-phosphate dehydrogenase family. In terms of assembly, homotetramer.

The protein localises to the cytoplasm. It carries out the reaction D-glyceraldehyde 3-phosphate + phosphate + NADP(+) = (2R)-3-phospho-glyceroyl phosphate + NADPH + H(+). The catalysed reaction is D-glyceraldehyde 3-phosphate + phosphate + NAD(+) = (2R)-3-phospho-glyceroyl phosphate + NADH + H(+). The protein operates within carbohydrate degradation; glycolysis; pyruvate from D-glyceraldehyde 3-phosphate: step 1/5. This is Glyceraldehyde-3-phosphate dehydrogenase from Thermococcus sibiricus (strain DSM 12597 / MM 739).